We begin with the raw amino-acid sequence, 282 residues long: tRNA (guanine-N(1)-)-methyltransferase (282 aa).

145–150 (IGDYVL) contributes to the S-adenosyl-L-methionine binding site.

This sequence belongs to the RNA methyltransferase TrmD family. In terms of assembly, homodimer.

Its subcellular location is the cytoplasm. It carries out the reaction guanosine(37) in tRNA + S-adenosyl-L-methionine = N(1)-methylguanosine(37) in tRNA + S-adenosyl-L-homocysteine + H(+). Functionally, specifically methylates guanosine-37 in various tRNAs. The chain is tRNA (guanine-N(1)-)-methyltransferase from Streptomyces avermitilis (strain ATCC 31267 / DSM 46492 / JCM 5070 / NBRC 14893 / NCIMB 12804 / NRRL 8165 / MA-4680).